We begin with the raw amino-acid sequence, 323 residues long: L-lactate dehydrogenase (323 aa).

NAD(+) contacts are provided by valine 12, aspartate 33, and tyrosine 65. Substrate-binding positions include arginine 94 and 126–129 (NPCD). An NAD(+)-binding site is contributed by threonine 149. Position 154–157 (154–157 (ETMR)) interacts with substrate. Histidine 181 serves as the catalytic Proton acceptor. Position 234 (threonine 234) interacts with substrate.

Belongs to the LDH/MDH superfamily. LDH family. As to quaternary structure, homotetramer.

Its subcellular location is the cytoplasm. It catalyses the reaction (S)-lactate + NAD(+) = pyruvate + NADH + H(+). Its pathway is fermentation; pyruvate fermentation to lactate; (S)-lactate from pyruvate: step 1/1. Its function is as follows. Catalyzes the conversion of lactate to pyruvate. The sequence is that of L-lactate dehydrogenase from Mycoplasmoides gallisepticum (strain R(low / passage 15 / clone 2)) (Mycoplasma gallisepticum).